Here is a 1100-residue protein sequence, read N- to C-terminus: DNA-directed RNA polymerase subunit beta (1100 aa).

The tract at residues 1064-1100 is disordered; it reads YEEDKEVDLMADVNQRRTPSRPTYESMSVGDIDDDDD. The span at 1079 to 1089 shows a compositional bias: polar residues; that stretch reads RRTPSRPTYES.

Belongs to the RNA polymerase beta chain family. In terms of assembly, in cyanobacteria the RNAP catalytic core is composed of 2 alpha, 1 beta, 1 beta', 1 gamma and 1 omega subunit. When a sigma factor is associated with the core the holoenzyme is formed, which can initiate transcription.

It catalyses the reaction RNA(n) + a ribonucleoside 5'-triphosphate = RNA(n+1) + diphosphate. DNA-dependent RNA polymerase catalyzes the transcription of DNA into RNA using the four ribonucleoside triphosphates as substrates. In Synechococcus elongatus (strain ATCC 33912 / PCC 7942 / FACHB-805) (Anacystis nidulans R2), this protein is DNA-directed RNA polymerase subunit beta.